We begin with the raw amino-acid sequence, 337 residues long: Beta-ketoacyl-[acyl-carrier-protein] synthase III (337 aa).

Residues Cys-119 and His-260 contribute to the active site. An ACP-binding region spans residues 261–265 (QANQR). Asn-290 is a catalytic residue.

The protein belongs to the thiolase-like superfamily. FabH family. In terms of assembly, homodimer.

The protein resides in the cytoplasm. The catalysed reaction is malonyl-[ACP] + acetyl-CoA + H(+) = 3-oxobutanoyl-[ACP] + CO2 + CoA. The protein operates within lipid metabolism; fatty acid biosynthesis. Its function is as follows. Catalyzes the condensation reaction of fatty acid synthesis by the addition to an acyl acceptor of two carbons from malonyl-ACP. Catalyzes the first condensation reaction which initiates fatty acid synthesis and may therefore play a role in governing the total rate of fatty acid production. Possesses both acetoacetyl-ACP synthase and acetyl transacylase activities. Its substrate specificity determines the biosynthesis of branched-chain and/or straight-chain of fatty acids. This Synechococcus sp. (strain WH7803) protein is Beta-ketoacyl-[acyl-carrier-protein] synthase III.